Reading from the N-terminus, the 235-residue chain is MEFLYSDEENYLKDRFFDFFNMNVDKDKYTSIGICGGRSIVNFLSVFLKQNFSFRRSHFFLVDERCVPLNDENSNYNLLNKNFFSKMVDKNLISISKFHAFVYSEIDEATAIHDYNIEFNSRFNIFDFIIVSVGEDGHIASLFPSRKLLFSDVEGYQYEYNSPKFPSKRISLTPKSLFGSKAVVLLFMGVDKKCALENFLASNSSINECPARLLKEHPNLLVLTNIKRDESYAGS.

It belongs to the glucosamine/galactosamine-6-phosphate isomerase family. 6-phosphogluconolactonase subfamily.

The catalysed reaction is 6-phospho-D-glucono-1,5-lactone + H2O = 6-phospho-D-gluconate + H(+). It participates in carbohydrate degradation; pentose phosphate pathway; D-ribulose 5-phosphate from D-glucose 6-phosphate (oxidative stage): step 2/3. Its function is as follows. Hydrolysis of 6-phosphogluconolactone to 6-phosphogluconate. In Borreliella burgdorferi (strain ATCC 35210 / DSM 4680 / CIP 102532 / B31) (Borrelia burgdorferi), this protein is 6-phosphogluconolactonase (pgl).